A 1009-amino-acid polypeptide reads, in one-letter code: DNA ligase 3 (1009 aa).

Residues 1–42 constitute a mitochondrion transit peptide; it reads MSLAFKIFFPQTLRALSRKELCLFRKHHWRDVRQFSQWSETD. The PARP-type zinc-finger motif lies at 93 to 185; that stretch reads FCVDYAKRGT…QITQHIADLS (93 aa). Zn(2+) contacts are provided by Cys105, Cys108, His139, and Cys142. 4 positions are modified to phosphoserine: Ser210, Ser216, Ser227, and Ser242. The interval 224–256 is disordered; that stretch reads RKFSGFSAKPNNSGEAPSSPTPKRSLSSSKCDP. The span at 240-252 shows a compositional bias: low complexity; the sequence is PSSPTPKRSLSSS. 4 interaction with DNA regions span residues 277-280, 318-323, 388-391, and 421-427; these read PSYN, VYNLND, TKED, and KMNSGAK. Position 506 (Glu506) interacts with ATP. The N6-AMP-lysine intermediate role is filled by Lys508. ATP is bound by residues Arg513 and Arg528. 2 residues coordinate Mg(2+): Glu560 and Glu655. Residues Lys660, Arg671, and Lys675 each contribute to the ATP site. Residues 842-917 are disordered; it reads AGDEGSSTTG…LATKSSPVKV (76 aa). Low complexity-rich tracts occupy residues 845–854 and 863–877; these read EGSSTTGGSS and SAVSRKAPSKPSAST. Residues 884–898 show a composition bias toward polar residues; sequence LSNSNSKDGNMQTAK. A Phosphoserine modification is found at Ser913. The BRCT domain occupies 933–1009; the sequence is VLLDIFTGVR…IRKRRLVAPC (77 aa).

This sequence belongs to the ATP-dependent DNA ligase family. Isoform 3 interacts (via BRCT domain) with the nuclear DNA-repair protein XRCC1. Interacts with POLG. Interacts with POLB. Mg(2+) is required as a cofactor. As to expression, testis, thymus, prostate and heart.

Its subcellular location is the mitochondrion. The protein resides in the nucleus. It catalyses the reaction ATP + (deoxyribonucleotide)n-3'-hydroxyl + 5'-phospho-(deoxyribonucleotide)m = (deoxyribonucleotide)n+m + AMP + diphosphate.. Functionally, isoform 3 functions as a heterodimer with DNA-repair protein XRCC1 in the nucleus and can correct defective DNA strand-break repair and sister chromatid exchange following treatment with ionizing radiation and alkylating agents. Isoform 1 is targeted to mitochondria, where it functions as a DNA ligase in mitochondrial base-excision DNA repair. This chain is DNA ligase 3 (LIG3), found in Homo sapiens (Human).